Here is a 420-residue protein sequence, read N- to C-terminus: Glutamyl-tRNA reductase (420 aa).

Substrate is bound by residues 49 to 52 (TCNR), Ser-109, 114 to 116 (EPQ), and Gln-120. Cys-50 acts as the Nucleophile in catalysis. Residue 189-194 (GAGETI) coordinates NADP(+).

The protein belongs to the glutamyl-tRNA reductase family. As to quaternary structure, homodimer.

It carries out the reaction (S)-4-amino-5-oxopentanoate + tRNA(Glu) + NADP(+) = L-glutamyl-tRNA(Glu) + NADPH + H(+). It functions in the pathway porphyrin-containing compound metabolism; protoporphyrin-IX biosynthesis; 5-aminolevulinate from L-glutamyl-tRNA(Glu): step 1/2. Catalyzes the NADPH-dependent reduction of glutamyl-tRNA(Glu) to glutamate 1-semialdehyde (GSA). This Sodalis glossinidius (strain morsitans) protein is Glutamyl-tRNA reductase.